The chain runs to 429 residues: CBL-interacting serine/threonine-protein kinase 7 (429 aa).

The Protein kinase domain occupies 25-280 (YELGRRLGSG…IETVMKTNWF (256 aa)). ATP-binding positions include 31–39 (LGSGSFAKV) and K54. The active-site Proton acceptor is the D149. Residues 167–195 (DFGLSALPEHLQNGLLHTACGTPAYTAPE) are activation loop. Position 171 is a phosphoserine (S171). T184 carries the post-translational modification Phosphothreonine. Residues 302–326 (SSVNSITAFDLISLSSGLDLSGLFE) enclose the NAF domain. The segment at 330-363 (KKERRFTAKVSGVEVEEKAKMIGEKLGYVVKKKM) is PPI.

It belongs to the protein kinase superfamily. CAMK Ser/Thr protein kinase family. SNF1 subfamily. As to quaternary structure, interacts with CBL1, CBL2 and CBL3. Mn(2+) serves as cofactor. Post-translationally, autophosphorylated. As to expression, strongly expressed in leaves, but barely expressed in roots, stems or flowers.

The catalysed reaction is L-seryl-[protein] + ATP = O-phospho-L-seryl-[protein] + ADP + H(+). The enzyme catalyses L-threonyl-[protein] + ATP = O-phospho-L-threonyl-[protein] + ADP + H(+). CIPK serine-threonine protein kinases interact with CBL proteins. Binding of a CBL protein to the regulatory NAF domain of CIPK protein lead to the activation of the kinase in a calcium-dependent manner. Phosphorylates the rice sucrose synthase (SuSy) in vitro in an allosteric manner. Involved in cold response. The chain is CBL-interacting serine/threonine-protein kinase 7 (CIPK7) from Arabidopsis thaliana (Mouse-ear cress).